The sequence spans 475 residues: MADMQNLVERLERAVGRLEAVSHTSDMHRGYADSPSKAGAAPYVQAFDSLLAGPVAEYLKISKEIGGDVQKHAEMVHTGLKLERALLVTASQCQQPAENKLSDLLAPISEQIKEVITFREKNRGSKLFNHLSAVSESIQALGWVAMAPKPGPYVKEMNDAAMFYTNRVLKEYKDVDKKHVDWVKAYLSIWTELQAYIKEFHTTGLAWSKTGPVAKELSGLPSGPSAGSCPPPPPPCPPPPPVSTISCSYESASRSSLFAQINQGESITHALKHVSDDMKTHKNPALKAQSGPVRSGPKPFSAPKPQTSPSPKRATKKEPAVLELEGKKWRVENQENVSNLVIEDTELKQVAYIYKCVNTTLQIKGKINSITVDNCKKLGLVFDDVVGIVEIINSKDVKVQVMGKVPTISINKTDGCHAYLSKNSLDCEIVSAKSSEMNVLIPTEGGDFNEFPVPEQFKTLWNGQKLVTTVTEIAG.

An N-acetylalanine modification is found at Ala-2. Tyr-31 is modified (phosphotyrosine). Ser-34 carries the phosphoserine modification. N6-acetyllysine is present on Lys-81. Disordered regions lie at residues Glu-216–Pro-237 and Met-278–Pro-319. Residues Ser-218–Ser-228 are compositionally biased toward low complexity. Lys-287 carries the post-translational modification N6-methyllysine. Ser-290, Ser-295, and Ser-301 each carry phosphoserine. Thr-307 is modified (phosphothreonine). A phosphoserine mark is found at Ser-308 and Ser-310. The C-CAP/cofactor C-like domain occupies Pro-319 to Val-453. Residue Lys-348 forms a Glycyl lysine isopeptide (Lys-Gly) (interchain with G-Cter in SUMO1) linkage.

Belongs to the CAP family. As to quaternary structure, homodimer. Binds actin monomers.

Its subcellular location is the cell membrane. In terms of biological role, directly regulates filament dynamics and has been implicated in a number of complex developmental and morphological processes, including mRNA localization and the establishment of cell polarity. This is Adenylyl cyclase-associated protein 1 (CAP1) from Homo sapiens (Human).